Here is a 71-residue protein sequence, read N- to C-terminus: Large ribosomal subunit protein eL38 (71 aa).

The protein belongs to the eukaryotic ribosomal protein eL38 family.

The sequence is that of Large ribosomal subunit protein eL38 (RpL38) from Argas monolakensis (Mono lake bird tick).